Reading from the N-terminus, the 318-residue chain is MNGDHMVLGSSVTDKKAIILVTILLLLRLVAIAGNGFIIAALGVEWVLRRMLLPCDXLLVSLGASRFCLQSVVMGKTIYVFLHPMAFPYNPVLQFLAFQWDFLNAATLWFSTWLSVFYCVKIAAFTHPVFLWLKHKLSGWLPWILFSSVGLSSFTTILFFIGNHRMYQNYLRNHLQPWNITGNSIRSYCEKFYLFPLKMITWTMPTAVFFICMILLITSLGRHMKKALLTTSGFREPSMQAHIKALLALLSFAMLFISYFLSLVFSAAGIFPPLDFKFWVWESVIYLCAAVHPIILLFSNCRLRAVLKSCRSSRCGTP.

Residues 1 to 7 (MNGDHMV) are Extracellular-facing. Residues 8 to 28 (LGSSVTDKKAIILVTILLLLR) traverse the membrane as a helical segment. Over 29–40 (LVAIAGNGFIIA) the chain is Cytoplasmic. Residues 41–61 (ALGVEWVLRRMLLPCDXLLVS) form a helical membrane-spanning segment. Residues 62–88 (LGASRFCLQSVVMGKTIYVFLHPMAFP) are Extracellular-facing. A helical membrane pass occupies residues 89 to 109 (YNPVLQFLAFQWDFLNAATLW). Residues 110 to 128 (FSTWLSVFYCVKIAAFTHP) are Cytoplasmic-facing. A helical transmembrane segment spans residues 129–149 (VFLWLKHKLSGWLPWILFSSV). Over 150–183 (GLSSFTTILFFIGNHRMYQNYLRNHLQPWNITGN) the chain is Extracellular. N-linked (GlcNAc...) asparagine glycosylation is present at Asn-179. A helical transmembrane segment spans residues 184-204 (SIRSYCEKFYLFPLKMITWTM). Topologically, residues 205 to 234 (PTAVFFICMILLITSLGRHMKKALLTTSGF) are cytoplasmic. A helical membrane pass occupies residues 235-255 (REPSMQAHIKALLALLSFAML). At 256–264 (FISYFLSLV) the chain is on the extracellular side. A helical transmembrane segment spans residues 265–285 (FSAAGIFPPLDFKFWVWESVI). Residues 286 to 318 (YLCAAVHPIILLFSNCRLRAVLKSCRSSRCGTP) are Cytoplasmic-facing.

The protein belongs to the G-protein coupled receptor T2R family.

Its subcellular location is the membrane. Functionally, receptor that may play a role in the perception of bitterness and is gustducin-linked. May play a role in sensing the chemical composition of the gastrointestinal content. The activity of this receptor may stimulate alpha gustducin, mediate PLC-beta-2 activation and lead to the gating of TRPM5. This Gorilla gorilla gorilla (Western lowland gorilla) protein is Taste receptor type 2 member 60 (TAS2R60).